Here is a 101-residue protein sequence, read N- to C-terminus: Protein Tat (101 aa).

The interaction with human CREBBP stretch occupies residues 1–24; that stretch reads MEPVDPNREPWNHPGSQPKTACTN. Residues 1-48 form a transactivation region; the sequence is MEPVDPNREPWNHPGSQPKTACTNCYCKKCCYHCQVCFLQKGLGISYG. Zn(2+) is bound by residues Cys22, Cys25, and Cys27. Positions 22–37 are cysteine-rich; the sequence is CTNCYCKKCCYHCQVC. Lys28 carries the post-translational modification N6-acetyllysine; by host PCAF. Zn(2+)-binding residues include Cys30, His33, Cys34, and Cys37. A core region spans residues 38–48; the sequence is FLQKGLGISYG. Residues 48-101 are disordered; that stretch reads GRKKRRQRRSAPPGSKTHQDLIPKQPLSQTQRKPTGPEESKKEVESKAEPDRFD. Residues 49–57 carry the Nuclear localization signal, RNA-binding (TAR), and protein transduction motif; that stretch reads RKKRRQRRS. The tract at residues 49-86 is interaction with the host capping enzyme RNGTT; the sequence is RKKRRQRRSAPPGSKTHQDLIPKQPLSQTQRKPTGPEE. Lys50 and Lys51 each carry N6-acetyllysine; by host EP300 and GCN5L2. Arg52 and Arg53 each carry asymmetric dimethylarginine; by host PRMT6. Residue Lys71 forms a Glycyl lysine isopeptide (Lys-Gly) (interchain with G-Cter in ubiquitin) linkage. Positions 82-101 are enriched in basic and acidic residues; that stretch reads TGPEESKKEVESKAEPDRFD.

This sequence belongs to the lentiviruses Tat family. Interacts with host CCNT1. Associates with the P-TEFb complex composed at least of Tat, P-TEFb (CDK9 and CCNT1), TAR RNA, RNA Pol II. Recruits the HATs CREBBP, TAF1/TFIID, EP300, PCAF and GCN5L2. Interacts with host KAT5/Tip60; this interaction targets the latter to degradation. Interacts with the host deacetylase SIRT1. Interacts with host capping enzyme RNGTT; this interaction stimulates RNGTT. Binds to host KDR, and to the host integrins ITGAV/ITGB3 and ITGA5/ITGB1. Interacts with host KPNB1/importin beta-1 without previous binding to KPNA1/importin alpha-1. Interacts with EIF2AK2. Interacts with host nucleosome assembly protein NAP1L1; this interaction may be required for the transport of Tat within the nucleus, since the two proteins interact at the nuclear rim. Interacts with host C1QBP/SF2P32; this interaction involves lysine-acetylated Tat. Interacts with the host chemokine receptors CCR2, CCR3 and CXCR4. Interacts with host DPP4/CD26; this interaction may trigger an anti-proliferative effect. Interacts with host LDLR. Interacts with the host extracellular matrix metalloproteinase MMP1. Interacts with host PRMT6; this interaction mediates Tat's methylation. Interacts with, and is ubiquitinated by MDM2/Hdm2. Interacts with host PSMC3 and HTATIP2. Interacts with STAB1; this interaction may overcome SATB1-mediated repression of IL2 and IL2RA (interleukin) in T cells by binding to the same domain than HDAC1. Interacts (when acetylated) with human CDK13, thereby increasing HIV-1 mRNA splicing and promoting the production of the doubly spliced HIV-1 protein Nef. Interacts with host TBP; this interaction modulates the activity of transcriptional pre-initiation complex. Interacts with host RELA. Interacts with host PLSCR1; this interaction negatively regulates Tat transactivation activity by altering its subcellular distribution. In terms of processing, asymmetrical arginine methylation by host PRMT6 seems to diminish the transactivation capacity of Tat and affects the interaction with host CCNT1. Post-translationally, acetylation by EP300, CREBBP, GCN5L2/GCN5 and PCAF regulates the transactivation activity of Tat. EP300-mediated acetylation of Lys-50 promotes dissociation of Tat from the TAR RNA through the competitive binding to PCAF's bromodomain. In addition, the non-acetylated Tat's N-terminus can also interact with PCAF. PCAF-mediated acetylation of Lys-28 enhances Tat's binding to CCNT1. Lys-50 is deacetylated by SIRT1. Polyubiquitination by host MDM2 does not target Tat to degradation, but activates its transactivation function and fosters interaction with CCNT1 and TAR RNA. In terms of processing, phosphorylated by EIF2AK2 on serine and threonine residues adjacent to the basic region important for TAR RNA binding and function. Phosphorylation of Tat by EIF2AK2 is dependent on the prior activation of EIF2AK2 by dsRNA.

The protein localises to the host nucleus. It is found in the host nucleolus. It localises to the host cytoplasm. Its subcellular location is the secreted. Transcriptional activator that increases RNA Pol II processivity, thereby increasing the level of full-length viral transcripts. Recognizes a hairpin structure at the 5'-LTR of the nascent viral mRNAs referred to as the transactivation responsive RNA element (TAR) and recruits the cyclin T1-CDK9 complex (P-TEFb complex) that will in turn hyperphosphorylate the RNA polymerase II to allow efficient elongation. The CDK9 component of P-TEFb and other Tat-activated kinases hyperphosphorylate the C-terminus of RNA Pol II that becomes stabilized and much more processive. Other factors such as HTATSF1/Tat-SF1, SUPT5H/SPT5, and HTATIP2 are also important for Tat's function. Besides its effect on RNA Pol II processivity, Tat induces chromatin remodeling of proviral genes by recruiting the histone acetyltransferases (HATs) CREBBP, EP300 and PCAF to the chromatin. This also contributes to the increase in proviral transcription rate, especially when the provirus integrates in transcriptionally silent region of the host genome. To ensure maximal activation of the LTR, Tat mediates nuclear translocation of NF-kappa-B by interacting with host RELA. Through its interaction with host TBP, Tat may also modulate transcription initiation. Tat can reactivate a latently infected cell by penetrating in it and transactivating its LTR promoter. In the cytoplasm, Tat is thought to act as a translational activator of HIV-1 mRNAs. Its function is as follows. Extracellular circulating Tat can be endocytosed by surrounding uninfected cells via the binding to several surface receptors such as CD26, CXCR4, heparan sulfate proteoglycans (HSPG) or LDLR. Neurons are rarely infected, but they internalize Tat via their LDLR. Through its interaction with nuclear HATs, Tat is potentially able to control the acetylation-dependent cellular gene expression. Modulates the expression of many cellular genes involved in cell survival, proliferation or in coding for cytokines or cytokine receptors. Tat plays a role in T-cell and neurons apoptosis. Tat induced neurotoxicity and apoptosis probably contribute to neuroAIDS. Circulating Tat also acts as a chemokine-like and/or growth factor-like molecule that binds to specific receptors on the surface of the cells, affecting many cellular pathways. In the vascular system, Tat binds to ITGAV/ITGB3 and ITGA5/ITGB1 integrins dimers at the surface of endothelial cells and competes with bFGF for heparin-binding sites, leading to an excess of soluble bFGF. The sequence is that of Protein Tat from Homo sapiens (Human).